A 382-amino-acid chain; its full sequence is Protein MSN1 (382 aa).

Residues 12-26 (LNENEAILTNRVAEL) are leucine-zipper. Polar residues-rich tracts occupy residues 104–114 (TLDPQGFTDGT) and 122–138 (NYTSVPMNNDQTAHPQN). Disordered stretches follow at residues 104 to 138 (TLDPQGFTDGTTAPGAPRNYTSVPMNNDQTAHPQN) and 155 to 260 (NSQE…EEEQ). A compositionally biased stretch (low complexity) spans 162–180 (SQQQTNSSNSISQENNSTN). Composition is skewed to polar residues over residues 181-198 (PSVDTRFNKPQNYNSNLV) and 207-221 (NPPNNDGGQSQGLYI). A compositionally biased stretch (low complexity) spans 222–231 (SSNSSQSRQS). A compositionally biased stretch (polar residues) spans 232–253 (PNLQKVSPNHENAVESNAQESV). The short motif at 266–271 (GLKRKR) is the Nuclear localization signal element.

It is found in the nucleus. In terms of biological role, may function as a transcriptional activator. Increased dosage of MSN1 restores invertase expression in yeast mutants defective in the SNF1 protein kinase, and msn1 disruption reduced derepression of invertase in the wild-type. May affect SUC2 expression. Expression of MSN1 enhances growth in iron-limiting conditions. This is Protein MSN1 (MSN1) from Saccharomyces cerevisiae (strain ATCC 204508 / S288c) (Baker's yeast).